Here is a 445-residue protein sequence, read N- to C-terminus: MAAQVASGVGNLNLNSEGGAAAKNISAQGSPENEARESDGEYDDDQGAPELGNTTAAKKKKKKTKKKKKGTSKVQTEPPRVILSSLFPNNQYPEGEIIEYQNENAYRTTNEEKRHLDRMNNDFLAEYRYAAEVHRQVRQYSQKAIKPGQTLTEIAEGIEESVRALTGHPGLEEGDNLRGGIAFPTGVNLNHCAAHYTPNAGNKMVLQYEDVMKVDFGVHINGRIVDSAFTIAFDPVYDNLLAAVKDATNTGIKQAGIDVRMSDIGAAIQEAMESYEVEIKGTSYPVKAIRNLNGHTIGRYEIHGGKNGKSVPIVKGGDQTKMEEGEVYAIETFGSTGRGYVRDDMETSHYAKIPDAPNVPLRLSSAKNLLNVITKNFGTLPFCRRYLDRLGQDKYLLGLNNLVANGIVDAYPPLCDVKGSYTAQFEHTILLRPNVKEVISRGDDY.

Positions M1 to R80 are disordered. Positions A57–T71 are enriched in basic residues. H195 serves as a coordination point for substrate. A divalent metal cation-binding residues include D215, D226, and H295. H303 contacts substrate. 2 residues coordinate a divalent metal cation: E331 and E426.

The protein belongs to the peptidase M24A family. Methionine aminopeptidase eukaryotic type 2 subfamily. Co(2+) serves as cofactor. Requires Zn(2+) as cofactor. The cofactor is Mn(2+). Fe(2+) is required as a cofactor.

It is found in the cytoplasm. The enzyme catalyses Release of N-terminal amino acids, preferentially methionine, from peptides and arylamides.. Cotranslationally removes the N-terminal methionine from nascent proteins. The N-terminal methionine is often cleaved when the second residue in the primary sequence is small and uncharged (Met-Ala-, Cys, Gly, Pro, Ser, Thr, or Val). The sequence is that of Methionine aminopeptidase 2 from Paracoccidioides brasiliensis (strain Pb03).